Here is a 565-residue protein sequence, read N- to C-terminus: Periplasmic trehalase (565 aa).

A signal peptide spans 1–30; the sequence is MKSPAPSRPQKMALIPACIFLCFAALSVQA. Substrate-binding positions include R152, 159 to 160, N196, 205 to 207, 277 to 279, and G310; these read WD, RSQ, and RPE. Active-site proton donor/acceptor residues include D312 and E496. E511 serves as a coordination point for substrate. The disordered stretch occupies residues 539–565; sequence CDNVPATRPLSESTTQPLKQKEAEPTP.

It belongs to the glycosyl hydrolase 37 family. As to quaternary structure, monomer.

The protein localises to the periplasm. It catalyses the reaction alpha,alpha-trehalose + H2O = alpha-D-glucose + beta-D-glucose. Provides the cells with the ability to utilize trehalose at high osmolarity by splitting it into glucose molecules that can subsequently be taken up by the phosphotransferase-mediated uptake system. The sequence is that of Periplasmic trehalase from Escherichia coli O45:K1 (strain S88 / ExPEC).